A 94-amino-acid chain; its full sequence is Integration host factor subunit beta (94 aa).

The protein belongs to the bacterial histone-like protein family. As to quaternary structure, heterodimer of an alpha and a beta chain.

In terms of biological role, this protein is one of the two subunits of integration host factor, a specific DNA-binding protein that functions in genetic recombination as well as in transcriptional and translational control. The protein is Integration host factor subunit beta of Aeromonas hydrophila subsp. hydrophila (strain ATCC 7966 / DSM 30187 / BCRC 13018 / CCUG 14551 / JCM 1027 / KCTC 2358 / NCIMB 9240 / NCTC 8049).